We begin with the raw amino-acid sequence, 188 residues long: Putative adenylate kinase (188 aa).

5 residues coordinate ATP: Gly10, Gly12, Lys13, Ser14, and Thr15. Residues 30–53 (HVSSFLIQNKAFSEYDELRQSYVI) are NMP. The segment at 103-113 (RRGWGELKIAE) is LID. ATP-binding residues include Arg104 and Lys142.

This sequence belongs to the adenylate kinase family. AK6 subfamily. As to quaternary structure, interacts with uS11. Not a structural component of 40S pre-ribosomes, but transiently interacts with them by binding to uS11.

It catalyses the reaction AMP + ATP = 2 ADP. It carries out the reaction ATP + H2O = ADP + phosphate + H(+). Broad-specificity nucleoside monophosphate (NMP) kinase that catalyzes the reversible transfer of the terminal phosphate group between nucleoside triphosphates and monophosphates. Also has ATPase activity. Involved in the late maturation steps of the 30S ribosomal particles, specifically 16S rRNA maturation. While NMP activity is not required for ribosome maturation, ATPase activity is. Associates transiently with small ribosomal subunit protein uS11. ATP hydrolysis breaks the interaction with uS11. May temporarily remove uS11 from the ribosome to enable a conformational change of the ribosomal RNA that is needed for the final maturation step of the small ribosomal subunit. The protein is Putative adenylate kinase of Sulfurisphaera tokodaii (strain DSM 16993 / JCM 10545 / NBRC 100140 / 7) (Sulfolobus tokodaii).